The following is a 349-amino-acid chain: AA9 family lytic polysaccharide monooxygenase C (349 aa).

A signal peptide spans 1–19 (MKSTFGLLALAAAAKLVSA). Cu(2+) contacts are provided by His-20 and His-102. An intrachain disulfide couples Cys-62 to Cys-183. O2 is bound at residue His-169. A Cu(2+)-binding site is contributed by Tyr-180. Positions 233–304 (DGSSSGSSGS…SGSNSGSDSC (72 aa)) are disordered. 2 stretches are compositionally biased toward low complexity: residues 234–262 (GSSSGSSGSSGSSPATTTAPAVSVTAAPT) and 269–304 (TSATPTTFVTATKPATTAAPAAPSASSGSNSGSDSC). Residues 311–347 (GSVKIYGQCGGQNYSGPTSCEAGLICKEWNPYYHQCV) form the CBM1 domain. 2 disulfides stabilise this stretch: Cys-319–Cys-336 and Cys-330–Cys-346. Asn-323 carries an N-linked (GlcNAc...) asparagine glycan.

The protein belongs to the polysaccharide monooxygenase AA9 family. Cu(2+) serves as cofactor.

It localises to the secreted. The enzyme catalyses [(1-&gt;4)-beta-D-glucosyl]n+m + reduced acceptor + O2 = 4-dehydro-beta-D-glucosyl-[(1-&gt;4)-beta-D-glucosyl]n-1 + [(1-&gt;4)-beta-D-glucosyl]m + acceptor + H2O.. Functionally, lytic polysaccharide monooxygenase (LPMO) that depolymerizes crystalline and amorphous polysaccharides via the oxidation of scissile alpha- or beta-(1-4)-glycosidic bonds, yielding C4 oxidation products. Catalysis by LPMOs requires the reduction of the active-site copper from Cu(II) to Cu(I) by a reducing agent and H(2)O(2) or O(2) as a cosubstrate. Active on cellulose and cello-oligosaccharides, as well as plant cell wall-derived hemicellulosic polysaccharides. Also active on cello-oligosaccharides such as cellohexaose, cellopentaose or cellotetraose. The protein is AA9 family lytic polysaccharide monooxygenase C of Aspergillus fumigatus (strain ATCC MYA-4609 / CBS 101355 / FGSC A1100 / Af293) (Neosartorya fumigata).